The chain runs to 227 residues: Glutathione S-transferase U13 (227 aa).

Residues aspartate 5–proline 86 form the GST N-terminal domain. Glutathione-binding positions include serine 15–proline 16, glutamate 43–lysine 44, lysine 57–valine 58, and glutamate 70–serine 71. The 133-residue stretch at aspartate 92 to phenylalanine 224 folds into the GST C-terminal domain. Threonine 158 is modified (phosphothreonine).

The protein belongs to the GST superfamily. Tau family.

Its subcellular location is the cytoplasm. The protein resides in the cytosol. The enzyme catalyses RX + glutathione = an S-substituted glutathione + a halide anion + H(+). Functionally, in vitro, possesses glutathione S-transferase activity toward 1-chloro-2,4-dinitrobenzene (CDNB) and benzyl isothiocyanate (BITC). May be involved in the conjugation of reduced glutathione to a wide number of exogenous and endogenous hydrophobic electrophiles and have a detoxification role against certain herbicides. The polypeptide is Glutathione S-transferase U13 (GSTU13) (Arabidopsis thaliana (Mouse-ear cress)).